Here is a 353-residue protein sequence, read N- to C-terminus: Photosystem II protein D1 (353 aa).

Transmembrane regions (helical) follow at residues Tyr29–Ile46, His118–Leu133, and Trp142–Ala156. Residue His118 participates in chlorophyll a binding. Residue Tyr126 coordinates pheophytin a. Residues Asp170 and Glu189 each contribute to the [CaMn4O5] cluster site. Residues Phe197 to Leu218 form a helical membrane-spanning segment. His198 serves as a coordination point for chlorophyll a. A quinone-binding positions include His215 and Ser264–Phe265. Position 215 (His215) interacts with Fe cation. His272 is a binding site for Fe cation. Residues Phe274 to Leu288 traverse the membrane as a helical segment. Residues His332, Glu333, Asp342, and Ala344 each contribute to the [CaMn4O5] cluster site. The propeptide occupies Ala345 to Gly353.

Belongs to the reaction center PufL/M/PsbA/D family. As to quaternary structure, PSII is composed of 1 copy each of membrane proteins PsbA, PsbB, PsbC, PsbD, PsbE, PsbF, PsbH, PsbI, PsbJ, PsbK, PsbL, PsbM, PsbT, PsbX, PsbY, PsbZ, Psb30/Ycf12, peripheral proteins PsbO, CyanoQ (PsbQ), PsbU, PsbV and a large number of cofactors. It forms dimeric complexes. The D1/D2 heterodimer binds P680, chlorophylls that are the primary electron donor of PSII, and subsequent electron acceptors. It shares a non-heme iron and each subunit binds pheophytin, quinone, additional chlorophylls, carotenoids and lipids. D1 provides most of the ligands for the Mn4-Ca-O5 cluster of the oxygen-evolving complex (OEC). There is also a Cl(-1) ion associated with D1 and D2, which is required for oxygen evolution. The PSII complex binds additional chlorophylls, carotenoids and specific lipids. is required as a cofactor. Tyr-161 forms a radical intermediate that is referred to as redox-active TyrZ, YZ or Y-Z. Post-translationally, C-terminally processed by CtpA; processing is essential to allow assembly of the oxygen-evolving complex and thus photosynthetic growth.

The protein localises to the cellular thylakoid membrane. It carries out the reaction 2 a plastoquinone + 4 hnu + 2 H2O = 2 a plastoquinol + O2. Photosystem II (PSII) is a light-driven water:plastoquinone oxidoreductase that uses light energy to abstract electrons from H(2)O, generating O(2) and a proton gradient subsequently used for ATP formation. It consists of a core antenna complex that captures photons, and an electron transfer chain that converts photonic excitation into a charge separation. The D1/D2 (PsbA/PsbD) reaction center heterodimer binds P680, the primary electron donor of PSII as well as several subsequent electron acceptors. The protein is Photosystem II protein D1 of Prochlorothrix hollandica.